Consider the following 342-residue polypeptide: Anthranilate phosphoribosyltransferase (342 aa).

Residues glycine 83, 86–87, threonine 91, 93–96, 111–119, and serine 123 contribute to the 5-phospho-alpha-D-ribose 1-diphosphate site; these read GD, NVST, and KHGNRSVSG. Glycine 83 serves as a coordination point for anthranilate. Serine 95 contributes to the Mg(2+) binding site. Asparagine 114 lines the anthranilate pocket. Residue arginine 169 coordinates anthranilate. Residues aspartate 228 and glutamate 229 each contribute to the Mg(2+) site.

This sequence belongs to the anthranilate phosphoribosyltransferase family. Homodimer. It depends on Mg(2+) as a cofactor.

It carries out the reaction N-(5-phospho-beta-D-ribosyl)anthranilate + diphosphate = 5-phospho-alpha-D-ribose 1-diphosphate + anthranilate. It functions in the pathway amino-acid biosynthesis; L-tryptophan biosynthesis; L-tryptophan from chorismate: step 2/5. Functionally, catalyzes the transfer of the phosphoribosyl group of 5-phosphorylribose-1-pyrophosphate (PRPP) to anthranilate to yield N-(5'-phosphoribosyl)-anthranilate (PRA). This Halorhodospira halophila (strain DSM 244 / SL1) (Ectothiorhodospira halophila (strain DSM 244 / SL1)) protein is Anthranilate phosphoribosyltransferase.